Reading from the N-terminus, the 943-residue chain is MLKLLLGDPNTRKLKRYQPIVEEINFLEEEISKLTDDELRQETHNLKSQISSESDIKQQKELLDESLPKAFAIVREASKRVLDMRHFDVQLIGGMVLHECQIAEMKTGEGKTLVATLPCYLNALTGKGVHVVTVNDYLARRDAEWMGQVHRFLGLSVGLIQQDMSPVQRKKNYDCDITYATNSELGFDYLRDNMSTDINEVVQRPFNYCVIDEVDSILIDEARTPLIISGQVERPQEKYQKASELALALVKAKEIGKDGIDPEGDYEVDEKQRSCILTDQGFAKCEEYLAVSDLYNPKDPWAHYITNALKAKELFIKDVNYIIKNNEAVIVDEFTGRVMPGRRWSDGQHQAIEAKESLKIQPETQTLASITYQNFFLLYPGLAGMTGTAKTEEVEFEKTYKLESTVIPTNQIRKREDLPDQVFKTEIGKWKAVARETAQIHRAGRPVLVGTTSVEKSELLSSLLAEEKIPHNLLNAKPENVEREAEIVAQAGRAGAVTIATNMAGRGTDIILGGNSDYMARLKLKEILIPLLVKPNNEHKPPIPKQRSSKSKGGFSSKVGSNLTKNIPDYSTSLFPCKLDEEIQKKLSVLSDELVKNWGDRQLSVLDLDDRIATAAEKAPTEDKMIKLLRESLSRVKDEYEKVLTHEEKKVREVGGLHVIGTERHESRRVDNQLRGRAGRQGDFGSTRFFLSLEDNLLRIFGGERVANLMNAFRVDEDMPIESGMLTRSLESAQKKVETYYYDIRKQVFEYDEVMNNQRKAVYSERLRVLQGTDLKRQVIGYGERTMYEIVEAYINPDLPPEEWDIAQLISKVKEFIYLLDDLKADDVKLLSIEELKNYLQEQLRTAYDLKESQIEQIRPGLMREAERFFILQQIDNLWREHLQSMDSLRESVGLRGYGQKDPLIEYKNEGYDMFLEMMTNMRRNVIYSMFMFQPKTDKDDKN.

ATP-binding positions include glutamine 90, 108–112 (GEGKT), and aspartate 509. The tract at residues 535–560 (PNNEHKPPIPKQRSSKSKGGFSSKVG) is disordered. Residues 551–560 (SKGGFSSKVG) show a composition bias toward low complexity.

This sequence belongs to the SecA family. Monomer and homodimer. Part of the essential Sec protein translocation apparatus which comprises SecA, SecYEG and auxiliary proteins SecDF. Other proteins may also be involved.

Its subcellular location is the cell inner membrane. The protein localises to the cellular thylakoid membrane. It localises to the cytoplasm. The enzyme catalyses ATP + H2O + cellular proteinSide 1 = ADP + phosphate + cellular proteinSide 2.. Part of the Sec protein translocase complex. Interacts with the SecYEG preprotein conducting channel. Has a central role in coupling the hydrolysis of ATP to the transfer of proteins into and across the cell membrane, serving as an ATP-driven molecular motor driving the stepwise translocation of polypeptide chains across the membrane. Functionally, probably participates in protein translocation into and across both the cytoplasmic and thylakoid membranes in cyanobacterial cells. This is Protein translocase subunit SecA from Prochlorococcus marinus (strain MIT 9312).